The primary structure comprises 1108 residues: Eukaryotic translation initiation factor 2-alpha kinase 3 (1108 aa).

Residues 1 to 27 (MERATQPRPRALLLLFLLLGCAAGISA) form the signal peptide. Over 28-506 (VARARSLLAP…HYSKNIRKKD (479 aa)) the chain is Lumenal. A disordered region spans residues 71–92 (EALPAASGEQESRATESDDDVE). Asparagine 253 carries an N-linked (GlcNAc...) asparagine glycan. The helical transmembrane segment at 507–527 (PILLLHWWKEIFGTILLCIVA) threads the bilayer. Over 528–1108 (TTFIVRRLFH…SSTFSPLPGN (581 aa)) the chain is Cytoplasmic. The disordered stretch occupies residues 542 to 563 (RQRKESETQCQTESKYDSVSAD). The Protein kinase domain occupies 585 to 1069 (FEPIQCMGRG…ATDIIENAVF (485 aa)). 591–599 (MGRGGFGVV) serves as a coordination point for ATP. Tyrosine 611 is modified (phosphotyrosine; by autocatalysis). Lysine 614 provides a ligand contact to ATP. Positions 639–880 (EHPGIVRYFN…SPKVYLYIQM (242 aa)) are insert loop. A Phosphoserine modification is found at serine 707. 2 disordered regions span residues 772–818 (DEGH…RMNR) and 832–856 (FKHS…TTLS). Residues 785-798 (SPYTRSREGTSSSI) are compositionally biased toward polar residues. Threonine 794 bears the Phosphothreonine mark. Residues 837 to 856 (SRSSSEATLSTSPTRPTTLS) are compositionally biased toward low complexity. Aspartate 929 serves as the catalytic Proton acceptor. At threonine 974 the chain carries Phosphothreonine. The segment at 1080–1108 (LRQRSRSLSSSGTKHSRQPSSTFSPLPGN) is disordered. Serine 1086 is modified (phosphoserine). Positions 1097-1108 (QPSSTFSPLPGN) are enriched in polar residues.

The protein belongs to the protein kinase superfamily. Ser/Thr protein kinase family. GCN2 subfamily. In terms of assembly, forms dimers with HSPA5/BIP in resting cells. Homotetramerizes in response to endoplasmic reticulum (ER) stress, leading to its activation. Interacts with HSP90B1/GRP94. Interacts with DNAJC3; inhibiting EIF2AK3/PERK activity. Interacts with ATAD3A; ATAD3A and EIF2S1/eIF-2-alpha occupy a common binding site within the cytoplasmic loop of EIF2AK3/PERK, leading to prevent EIF2AK3/PERK association with its substrate EIF2S1/eIF-2-alpha. Interacts with MFN2. Interacts with TMEM33. Interacts with PDIA6. Interacts with LACC1. Post-translationally, oligomerization of the N-terminal ER luminal domain by ER stress promotes EIF2AK3/PERK trans-autophosphorylation of the C-terminal cytoplasmic kinase domain at multiple residues including Thr-974 on the kinase activation loop. Autophosphorylated at Tyr-611 following endoplasmic reticulum stress, leading to activate its activity. Dephosphorylated at Tyr-611 by PTPN1/PTP1B, leading to inactivate its enzyme activity. Phosphorylation at Thr-794 by AKT (AKT1, AKT2 and/or AKT3) inactivates EIF2AK3/PERK. ADP-ribosylated by PARP16 upon ER stress, which increases kinase activity. Ubiquitous.

It is found in the endoplasmic reticulum membrane. It catalyses the reaction L-seryl-[protein] + ATP = O-phospho-L-seryl-[protein] + ADP + H(+). The catalysed reaction is L-threonyl-[protein] + ATP = O-phospho-L-threonyl-[protein] + ADP + H(+). The enzyme catalyses L-tyrosyl-[protein] + ATP = O-phospho-L-tyrosyl-[protein] + ADP + H(+). With respect to regulation, inhibited by HSPA5/BIP in absence of stress. Perturbation in protein folding in the endoplasmic reticulum (ER) promotes reversible dissociation from HSPA5/BIP and oligomerization, resulting in trans-autophosphorylation and kinase activity induction. Inactivated following phosphorylation at Thr-794 by AKT (AKT1, AKT2 and/or AKT3). Inhibited by ATAD3A at mitochondria-endoplasmic reticulum contact sites, providing a safe haven for mitochondrial protein translation during ER stress. Its function is as follows. Metabolic-stress sensing protein kinase that phosphorylates the alpha subunit of eukaryotic translation initiation factor 2 (EIF2S1/eIF-2-alpha) in response to various stress, such as unfolded protein response (UPR). Key effector of the integrated stress response (ISR) to unfolded proteins: EIF2AK3/PERK specifically recognizes and binds misfolded proteins, leading to its activation and EIF2S1/eIF-2-alpha phosphorylation. EIF2S1/eIF-2-alpha phosphorylation in response to stress converts EIF2S1/eIF-2-alpha in a global protein synthesis inhibitor, leading to a global attenuation of cap-dependent translation, while concomitantly initiating the preferential translation of ISR-specific mRNAs, such as the transcriptional activators ATF4 and QRICH1, and hence allowing ATF4- and QRICH1-mediated reprogramming. The EIF2AK3/PERK-mediated unfolded protein response increases mitochondrial oxidative phosphorylation by promoting ATF4-mediated expression of COX7A2L/SCAF1, thereby increasing formation of respiratory chain supercomplexes. In contrast to most subcellular compartments, mitochondria are protected from the EIF2AK3/PERK-mediated unfolded protein response due to EIF2AK3/PERK inhibition by ATAD3A at mitochondria-endoplasmic reticulum contact sites. In addition to EIF2S1/eIF-2-alpha, also phosphorylates NFE2L2/NRF2 in response to stress, promoting release of NFE2L2/NRF2 from the BCR(KEAP1) complex, leading to nuclear accumulation and activation of NFE2L2/NRF2. Serves as a critical effector of unfolded protein response (UPR)-induced G1 growth arrest due to the loss of cyclin-D1 (CCND1). Involved in control of mitochondrial morphology and function. The sequence is that of Eukaryotic translation initiation factor 2-alpha kinase 3 (Eif2ak3) from Rattus norvegicus (Rat).